A 119-amino-acid polypeptide reads, in one-letter code: Albumin-1 (119 aa).

An N-terminal signal peptide occupies residues 1–19; that stretch reads MAVFLLATSTIMFPTKIEA. 3 cysteine pairs are disulfide-bonded: Cys22/Cys39, Cys26/Cys41, and Cys34/Cys51. 2 propeptides span residues 57 to 64 and 117 to 119; these read LSSVAKMI and TTK.

The C-terminal glycine may be removed from A1b.

Its function is as follows. A1b binds to basic 7S globulin (BG) and stimulates its phosphorylation activity. Involved in the signal transduction system to regulate the growth and differentiation as a hormone peptide. The protein is Albumin-1 of Glycine max (Soybean).